Reading from the N-terminus, the 375-residue chain is Succinyl-diaminopimelate desuccinylase (375 aa).

His66 lines the Zn(2+) pocket. The active site involves Asp68. Asp99 contributes to the Zn(2+) binding site. Residue Glu133 is the Proton acceptor of the active site. Residues Glu134, Glu162, and His348 each contribute to the Zn(2+) site.

It belongs to the peptidase M20A family. DapE subfamily. In terms of assembly, homodimer. Zn(2+) is required as a cofactor. Requires Co(2+) as cofactor.

The enzyme catalyses N-succinyl-(2S,6S)-2,6-diaminopimelate + H2O = (2S,6S)-2,6-diaminopimelate + succinate. It functions in the pathway amino-acid biosynthesis; L-lysine biosynthesis via DAP pathway; LL-2,6-diaminopimelate from (S)-tetrahydrodipicolinate (succinylase route): step 3/3. In terms of biological role, catalyzes the hydrolysis of N-succinyl-L,L-diaminopimelic acid (SDAP), forming succinate and LL-2,6-diaminopimelate (DAP), an intermediate involved in the bacterial biosynthesis of lysine and meso-diaminopimelic acid, an essential component of bacterial cell walls. This chain is Succinyl-diaminopimelate desuccinylase, found in Herminiimonas arsenicoxydans.